A 192-amino-acid chain; its full sequence is Phosphoheptose isomerase (192 aa).

The SIS domain maps to 36-192 (CVDSLAAGGK…DQVEAVAAPA (157 aa)). 51–53 (NGG) contributes to the substrate binding site. Residues His-60 and Glu-64 each contribute to the Zn(2+) site. Residues Glu-64, 93 to 94 (ND), 119 to 121 (TTS), Ser-124, and Gln-171 contribute to the substrate site. 2 residues coordinate Zn(2+): Gln-171 and His-179.

Belongs to the SIS family. GmhA subfamily. In terms of assembly, homotetramer. It depends on Zn(2+) as a cofactor.

It localises to the cytoplasm. It carries out the reaction 2 D-sedoheptulose 7-phosphate = D-glycero-alpha-D-manno-heptose 7-phosphate + D-glycero-beta-D-manno-heptose 7-phosphate. It participates in carbohydrate biosynthesis; D-glycero-D-manno-heptose 7-phosphate biosynthesis; D-glycero-alpha-D-manno-heptose 7-phosphate and D-glycero-beta-D-manno-heptose 7-phosphate from sedoheptulose 7-phosphate: step 1/1. In terms of biological role, catalyzes the isomerization of sedoheptulose 7-phosphate in D-glycero-D-manno-heptose 7-phosphate. The polypeptide is Phosphoheptose isomerase (Paramagnetospirillum magneticum (strain ATCC 700264 / AMB-1) (Magnetospirillum magneticum)).